The sequence spans 1259 residues: Lysine-specific demethylase 2B (1259 aa).

One can recognise a JmjC domain in the interval 147–315 (FSHTKLERVV…MQLRVFEIED (169 aa)). T208 lines the substrate pocket. The Fe cation site is built by H211 and D213. A substrate-binding site is contributed by K228. H283 provides a ligand contact to Fe cation. The span at 388–402 (EEKGNLVEKPSKQSG) shows a compositional bias: basic and acidic residues. Disordered regions lie at residues 388–463 (EEKG…ATDM) and 536–562 (KPSK…SANR). The span at 403–413 (DESSTTNSTHS) shows a compositional bias: polar residues. The segment covering 414 to 423 (NGKDAAEKKQ) has biased composition (basic and acidic residues). Polar residues predominate over residues 426–437 (TLMQQLKRTLSN). Over residues 536–548 (KPSKNRAVGRPKG) the composition is skewed to basic residues. The CXXC-type zinc finger occupies 567-613 (ARRRRTRCRKCEACLRTECGECHFCKDMKKFGGPGRMKQSCIMRQCI). Positions 574, 577, 580, 585, 588, 591, 607, 612, 623, 626, 649, 652, 657, 660, 680, and 683 each coordinate Zn(2+). The segment at 620-686 (TAVCLVCGEA…CWECPKCNHA (67 aa)) adopts a PHD-type zinc-finger fold. 2 stretches are compositionally biased toward basic and acidic residues: residues 729–763 (KKKV…EDGH) and 771–790 (EKPP…EEKL). A disordered region spans residues 729–958 (KKKVEREETP…PPPSLSPPKC (230 aa)). The segment covering 835-848 (SRSSSPTAGPSTEG) has biased composition (polar residues). Positions 854 to 863 (KKKIRRKRRV) are enriched in basic residues. Over residues 864-877 (SNKELSKELSKELN) the composition is skewed to basic and acidic residues. Positions 864–891 (SNKELSKELSKELNQEIQKTESSLASEN) form a coiled coil. The segment covering 878 to 889 (QEIQKTESSLAS) has biased composition (polar residues). A compositionally biased stretch (basic and acidic residues) spans 890-908 (ENHHPIKSEPESDNEESKK). The F-box domain maps to 985-1030 (AHVMQREVWMAIFSYLSHRDLCICMRICRTWNRWCCDKRLWTQIDL). LRR repeat units follow at residues 1056–1081 (WTNI…NLSG), 1082–1105 (CSWI…NVQW), 1145–1170 (GLDI…DLSY), 1171–1200 (CNHV…NLSD), and 1201–1225 (CNNV…DLRF).

This sequence belongs to the JHDM1 histone demethylase family. It depends on Fe(2+) as a cofactor.

Its subcellular location is the nucleus. The protein resides in the nucleolus. It is found in the chromosome. The enzyme catalyses N(6),N(6)-dimethyl-L-lysyl(36)-[histone H3] + 2 2-oxoglutarate + 2 O2 = L-lysyl(36)-[histone H3] + 2 formaldehyde + 2 succinate + 2 CO2. Histone demethylase activity is inhibited by fumarate. In terms of biological role, histone demethylase that demethylates 'Lys-4' and 'Lys-36' of histone H3, thereby playing a central role in histone code. Preferentially demethylates trimethylated H3 'Lys-4' and dimethylated H3 'Lys-36' residue while it has weak or no activity for mono- and tri-methylated H3 'Lys-36'. Preferentially binds the transcribed region of ribosomal RNA and represses the transcription of ribosomal RNA genes which inhibits cell growth and proliferation. In Xenopus laevis (African clawed frog), this protein is Lysine-specific demethylase 2B (kdm2b).